The primary structure comprises 179 residues: uncharacterized protein (179 aa).

The segment at 27–54 is disordered; that stretch reads TAKKSRVQAREARAAVEENKKAQLERDK.

This is an uncharacterized protein from Escherichia coli (strain K12).